The chain runs to 307 residues: Ribonuclease Z (307 aa).

Zn(2+)-binding residues include H63, H65, D67, H68, H140, D211, and H269. Residue D67 is the Proton acceptor of the active site.

The protein belongs to the RNase Z family. As to quaternary structure, homodimer. Requires Zn(2+) as cofactor.

It carries out the reaction Endonucleolytic cleavage of RNA, removing extra 3' nucleotides from tRNA precursor, generating 3' termini of tRNAs. A 3'-hydroxy group is left at the tRNA terminus and a 5'-phosphoryl group is left at the trailer molecule.. In terms of biological role, zinc phosphodiesterase, which displays some tRNA 3'-processing endonuclease activity. Probably involved in tRNA maturation, by removing a 3'-trailer from precursor tRNA. This chain is Ribonuclease Z, found in Bacillus subtilis (strain 168).